A 549-amino-acid polypeptide reads, in one-letter code: Cytoplasmic trehalase (549 aa).

Residues R168, 175–176 (WD), N212, 221–223 (RSQ), 292–294 (RDE), and G324 each bind substrate. Residues D326 and E509 each act as proton donor/acceptor in the active site. E525 is a binding site for substrate.

This sequence belongs to the glycosyl hydrolase 37 family. In terms of assembly, monomer.

The protein localises to the cytoplasm. It carries out the reaction alpha,alpha-trehalose + H2O = alpha-D-glucose + beta-D-glucose. It functions in the pathway glycan degradation; trehalose degradation; D-glucose from alpha,alpha-trehalose: step 1/1. Functionally, hydrolyzes trehalose to glucose. Could be involved, in cells returning to low osmolarity conditions, in the utilization of the accumulated cytoplasmic trehalose, which was synthesized in response to high osmolarity. In Salmonella typhi, this protein is Cytoplasmic trehalase.